The chain runs to 60 residues: uncharacterized protein (60 aa).

This is an uncharacterized protein from Archaeoglobus fulgidus (strain ATCC 49558 / DSM 4304 / JCM 9628 / NBRC 100126 / VC-16).